Reading from the N-terminus, the 185-residue chain is Small ribosomal subunit protein uS4c (185 aa).

The region spanning 72 to 134 is the S4 RNA-binding domain; it reads MRLDNVIFRL…PTSCNALKGE (63 aa). The disordered stretch occupies residues 132–154; it reads KGESPGGGETPDHLTASLSEGSR.

It belongs to the universal ribosomal protein uS4 family. In terms of assembly, part of the 30S ribosomal subunit. Contacts protein S5. The interaction surface between S4 and S5 is involved in control of translational fidelity.

The protein resides in the plastid. It is found in the chloroplast. Functionally, one of the primary rRNA binding proteins, it binds directly to 16S rRNA where it nucleates assembly of the body of the 30S subunit. With S5 and S12 plays an important role in translational accuracy. The chain is Small ribosomal subunit protein uS4c (rps4) from Woodwardia radicans (Rooting chainfern).